A 184-amino-acid polypeptide reads, in one-letter code: Photosystem I assembly protein Ycf4 (184 aa).

A run of 2 helical transmembrane segments spans residues 22-42 and 57-77; these read FCWAFILFLGSLGFLLVGTSS and IIFFPQGIVMSFYGIAGLFIS.

This sequence belongs to the Ycf4 family.

It localises to the plastid. Its subcellular location is the chloroplast thylakoid membrane. Functionally, seems to be required for the assembly of the photosystem I complex. In Lobularia maritima (Sweet alyssum), this protein is Photosystem I assembly protein Ycf4.